Reading from the N-terminus, the 67-residue chain is Type 3 secretion system chaperone PscE (67 aa).

A coiled-coil region spans residues 16-37; the sequence is HAAALRQRLQAALAECRRELAR.

The protein belongs to the YscE family. As to quaternary structure, forms a stable ternary complex with PscF/SctF and PscG within the cytoplasm. Co-stabilized by PscG.

The protein resides in the cytoplasm. Functionally, chaperone of the type III secretion system (T3SS), also called injectisome, which is used to inject bacterial effector proteins into eukaryotic host cells, facilitating the establishment and dissemination of infection. Along with PscG, prevents premature polymerization of the PscF/SctF needle protein within the cytoplasm. Required for type III secretion needle assembly. Also required for cytotoxicity by influencing PscF/SctF levels. In Pseudomonas aeruginosa (strain ATCC 15692 / DSM 22644 / CIP 104116 / JCM 14847 / LMG 12228 / 1C / PRS 101 / PAO1), this protein is Type 3 secretion system chaperone PscE (pscE).